The sequence spans 568 residues: Natural resistance-associated macrophage protein 2 (568 aa).

Basic and acidic residues predominate over residues 1-20 (MVLDPEEKIPDDGASGDHGD). Residues 1-45 (MVLDPEEKIPDDGASGDHGDSASLGAINPAYSNSSLPHSTGDSEE) form a disordered region. At 1-69 (MVLDPEEKIP…EEYSCFSFRK (69 aa)) the chain is on the cytoplasmic side. Over residues 30–40 (AYSNSSLPHST) the composition is skewed to polar residues. The chain crosses the membrane as a helical span at residues 70 to 90 (LWAFTGPGFLMSIAYLDPGNI). The Extracellular portion of the chain corresponds to 91–95 (ESDLQ). The helical transmembrane segment at 96–117 (SGAVAGFKLLWVLLLATIVGLL) threads the bilayer. At 118–154 (LQRLAARLGVVTGLHLAEVCHRQYPKVPRIILWLMVE) the chain is on the cytoplasmic side. The chain crosses the membrane as a helical span at residues 155–175 (LAIIGSDMQEVIGSAIAINLL). Residues 176–179 (SAGR) lie on the Extracellular side of the membrane. Residues 180–194 (VPLYGGVLITIADTF) form a helical membrane-spanning segment. Residues 195-208 (VFLFLDKYGLRKLE) are Cytoplasmic-facing. The helical transmembrane segment at 209 to 229 (AFFGFLITIMALTFGYEYVTV) threads the bilayer. Over 230–255 (KPSQSQVLRGMFVPSCSGCHTPQVEQ) the chain is Extracellular. The chain crosses the membrane as a helical span at residues 256-276 (AVGIVGAVIMPHNMYLHSALV). Residues 277-301 (KSRQVNRANKQEVREANKYFFIESC) lie on the Cytoplasmic side of the membrane. The chain crosses the membrane as a helical span at residues 302–322 (IALFVSFIINVFVVSVFAEAF). The Extracellular portion of the chain corresponds to 323–360 (FEKTNEQVVEVCRNSSSPHADLFPNDNSTLAVDIYKGG). 2 N-linked (GlcNAc...) asparagine glycosylation sites follow: Asn-336 and Asn-349. A helical transmembrane segment spans residues 361–381 (VVLGCYFGPAALYIWAVGILA). The Cytoplasmic portion of the chain corresponds to 382–408 (AGQSSTMTGTYSGQFVMEGFLNLKWSR). A helical membrane pass occupies residues 409 to 429 (FARVILTRSIAIIPTLLVAVF). Residues 430–440 (QDVEHLTGMND) are Extracellular-facing. A helical membrane pass occupies residues 441 to 461 (FLNVLQSLQLPFALIPILTFT). At 462 to 482 (SLRPVMSEFSNGIGWRIAGGI) the chain is on the cytoplasmic side. The helical transmembrane segment at 483–503 (LVLLVCSINMYFVVVYVQELG) threads the bilayer. Residues 504–506 (HVA) lie on the Extracellular side of the membrane. Residues 507–527 (LYVVAAVVSVAYLGFVFYLGW) form a helical membrane-spanning segment. Topologically, residues 528–568 (QCLIALGLSFLDCGRSYHLGLTARPEIYLLNTVDAVSLVSR) are cytoplasmic. Positions 555 to 559 (YLLNT) are required for early endosome targeting. Phosphoserine occurs at positions 556, 564, and 567.

This sequence belongs to the NRAMP family. As to quaternary structure, forms a complex with NDFIP1 and NEDD4L, in cortical neurons, in response to iron and cobalt exposure; this interaction leads to SLC11A2 ubiquitination by NEDD4L and proteasome-dependent degradation. Interacts with NDFIP1, NDFIP2 and WWP2; this interaction leads to SLC11A2 ubiquitination by WWP2 and subsequent proteasome-dependent degradation. Interacts with COX2 and TOM6 at the outer mitochondrion membrane. Interacts with ARRDC1; this interaction regulates the incorporation of SLC11A2 into extracellular vesicles through an ubiquitination-dependent mechanism. Interacts with ARRDC4; controls the incorporation of SLC11A2 into extracellular vesicles through an ubiquitination-dependent mechanism. Post-translationally, ubiquitinated by WWP2. N-glycosylated. Ubiquitous. In terms of tissue distribution, expressed in proximal intestine, kidney and brain.

The protein localises to the golgi apparatus. It localises to the trans-Golgi network membrane. It is found in the early endosome membrane. The protein resides in the recycling endosome membrane. Its subcellular location is the late endosome membrane. The protein localises to the lysosome membrane. It localises to the apical cell membrane. It is found in the mitochondrion outer membrane. The protein resides in the extracellular vesicle membrane. It catalyses the reaction Fe(2+)(in) + H(+)(in) = Fe(2+)(out) + H(+)(out). The enzyme catalyses Cd(2+)(out) + H(+)(out) = Cd(2+)(in) + H(+)(in). It carries out the reaction Co(2+)(out) + H(+)(out) = Co(2+)(in) + H(+)(in). The catalysed reaction is Mn(2+)(in) + H(+)(in) = Mn(2+)(out) + H(+)(out). It catalyses the reaction Zn(2+)(out) + H(+)(out) = Zn(2+)(in) + H(+)(in). The enzyme catalyses Ni(2+)(out) + H(+)(out) = Ni(2+)(in) + H(+)(in). It carries out the reaction H(+)(in) = H(+)(out). The catalysed reaction is Fe(2+)(in) = Fe(2+)(out). Its activity is regulated as follows. Inhibited by 2-(3-carbamimidoylsulfanylmethyl-benzyl)-isothiourea. Functionally, proton-coupled metal ion symporter operating with a proton to metal ion stoichiometry of 1:1. Selectively transports various divalent metal cations, in decreasing affinity: Cd(2+) &gt; Fe(2+) &gt; Co(2+), Mn(2+) &gt;&gt; Zn(2+), Ni(2+), VO(2+). Essential for maintenance of iron homeostasis by modulating intestinal absorption of dietary Fe(2+) and TF-associated endosomal Fe(2+) transport in erythroid precursors and other cells. Enables Fe(2+) and Mn(2+) ion entry into mitochondria, and is thus expected to promote mitochondrial heme synthesis, iron-sulfur cluster biogenesis and antioxidant defense. Can mediate uncoupled fluxes of either protons or metal ions. The chain is Natural resistance-associated macrophage protein 2 (Slc11a2) from Rattus norvegicus (Rat).